The chain runs to 179 residues: Large ribosomal subunit protein uL5 (179 aa).

It belongs to the universal ribosomal protein uL5 family. As to quaternary structure, part of the 50S ribosomal subunit; part of the 5S rRNA/L5/L18/L25 subcomplex. Contacts the 5S rRNA and the P site tRNA. Forms a bridge to the 30S subunit in the 70S ribosome.

In terms of biological role, this is one of the proteins that bind and probably mediate the attachment of the 5S RNA into the large ribosomal subunit, where it forms part of the central protuberance. In the 70S ribosome it contacts protein S13 of the 30S subunit (bridge B1b), connecting the 2 subunits; this bridge is implicated in subunit movement. Contacts the P site tRNA; the 5S rRNA and some of its associated proteins might help stabilize positioning of ribosome-bound tRNAs. This Stutzerimonas stutzeri (strain A1501) (Pseudomonas stutzeri) protein is Large ribosomal subunit protein uL5.